The primary structure comprises 142 residues: Transcriptional regulator MraZ (142 aa).

2 consecutive SpoVT-AbrB domains span residues 5–47 (THSP…SERE) and 76–119 (ASDE…DAQA).

It belongs to the MraZ family. Forms oligomers.

Its subcellular location is the cytoplasm. It localises to the nucleoid. This chain is Transcriptional regulator MraZ, found in Arthrobacter sp. (strain FB24).